The following is a 105-amino-acid chain: Platelet factor 4 (105 aa).

Positions Met-1 to Ala-29 are cleaved as a signal peptide. An O-linked (GalNAc...) threonine glycan is attached at Thr-31. Disulfide bonds link Cys-44–Cys-71 and Cys-46–Cys-87. Phosphoserine is present on Ser-61. Lys-96–Ile-102 contacts heparin.

The protein belongs to the intercrine alpha (chemokine CxC) family. As to quaternary structure, homotetramer. Interacts with TNFAIP6 (via Link domain). Interacts with CCR1. Interacts with CXCR3. Interacts with THBD; this interaction enhances generation of activated protein C.

The protein localises to the secreted. In terms of biological role, chemokine released during platelet aggregation that plays a role in different biological processes including hematopoiesis, cell proliferation, differentiation, and activation. Acts via different functional receptors including CCR1, CXCR3A or CXCR3B. Upon interaction with CXCR3A receptor, induces activated T-lymphocytes migration mediated via downstream Ras/extracellular signal-regulated kinase (ERK) signaling. Neutralizes the anticoagulant effect of heparin by binding more strongly to heparin than to the chondroitin-4-sulfate chains of the carrier molecule. Plays a role in the inhibition of hematopoiesis and in the maintenance of hematopoietic stem cell (HSC) quiescence. Chemotactic for neutrophils and monocytes via CCR1. Inhibits endothelial cell proliferation. In cooperation with toll-like receptor 8/TLR8, induces chromatin remodeling and activates inflammatory gene expression via the TBK1-IRF5 axis. In addition, induces myofibroblast differentiation and collagen synthesis in different precursor cells, including endothelial cells, by stimulating endothelial-to-mesenchymal transition. Interacts with thrombomodulin/THBD to enhance the activation of protein C and thus potentiates its anticoagulant activity. The sequence is that of Platelet factor 4 (Pf4) from Mus musculus (Mouse).